Reading from the N-terminus, the 413-residue chain is Gamma-glutamyl phosphate reductase (413 aa).

It belongs to the gamma-glutamyl phosphate reductase family.

Its subcellular location is the cytoplasm. The enzyme catalyses L-glutamate 5-semialdehyde + phosphate + NADP(+) = L-glutamyl 5-phosphate + NADPH + H(+). The protein operates within amino-acid biosynthesis; L-proline biosynthesis; L-glutamate 5-semialdehyde from L-glutamate: step 2/2. Functionally, catalyzes the NADPH-dependent reduction of L-glutamate 5-phosphate into L-glutamate 5-semialdehyde and phosphate. The product spontaneously undergoes cyclization to form 1-pyrroline-5-carboxylate. In Anoxybacillus flavithermus (strain DSM 21510 / WK1), this protein is Gamma-glutamyl phosphate reductase.